The following is a 352-amino-acid chain: tRNA pseudouridine synthase D (352 aa).

Aspartate 81 functions as the Nucleophile in the catalytic mechanism. One can recognise a TRUD domain in the interval 157–303; it reads GIPNYFGAQR…MSHERRILRL (147 aa).

It belongs to the pseudouridine synthase TruD family.

The enzyme catalyses uridine(13) in tRNA = pseudouridine(13) in tRNA. Responsible for synthesis of pseudouridine from uracil-13 in transfer RNAs. This chain is tRNA pseudouridine synthase D, found in Pseudomonas fluorescens (strain Pf0-1).